Reading from the N-terminus, the 393-residue chain is NAD(P)H-quinone oxidoreductase subunit H, chloroplastic (393 aa).

This sequence belongs to the complex I 49 kDa subunit family. In terms of assembly, NDH is composed of at least 16 different subunits, 5 of which are encoded in the nucleus.

It localises to the plastid. Its subcellular location is the chloroplast thylakoid membrane. It carries out the reaction a plastoquinone + NADH + (n+1) H(+)(in) = a plastoquinol + NAD(+) + n H(+)(out). The enzyme catalyses a plastoquinone + NADPH + (n+1) H(+)(in) = a plastoquinol + NADP(+) + n H(+)(out). Functionally, NDH shuttles electrons from NAD(P)H:plastoquinone, via FMN and iron-sulfur (Fe-S) centers, to quinones in the photosynthetic chain and possibly in a chloroplast respiratory chain. The immediate electron acceptor for the enzyme in this species is believed to be plastoquinone. Couples the redox reaction to proton translocation, and thus conserves the redox energy in a proton gradient. In Daucus carota (Wild carrot), this protein is NAD(P)H-quinone oxidoreductase subunit H, chloroplastic.